The sequence spans 678 residues: Glycine--tRNA ligase beta subunit (678 aa).

Belongs to the class-II aminoacyl-tRNA synthetase family. In terms of assembly, tetramer of two alpha and two beta subunits.

The protein localises to the cytoplasm. It carries out the reaction tRNA(Gly) + glycine + ATP = glycyl-tRNA(Gly) + AMP + diphosphate. The protein is Glycine--tRNA ligase beta subunit of Streptococcus pneumoniae (strain Hungary19A-6).